We begin with the raw amino-acid sequence, 445 residues long: uncharacterized protein (445 aa).

The disordered stretch occupies residues 139-160 (TESQKDLEYERKANKTKEENQQ).

This is an uncharacterized protein from Mycoplasma pneumoniae (strain ATCC 29342 / M129 / Subtype 1) (Mycoplasmoides pneumoniae).